A 623-amino-acid polypeptide reads, in one-letter code: Sulfite reductase [NADPH] flavoprotein alpha-component (623 aa).

A disordered region spans residues methionine 1–aspartate 32. The Flavodoxin-like domain occupies leucine 87–leucine 225. Residues serine 93 to alanine 98, serine 140 to glycine 143, and leucine 176 to cysteine 185 each bind FMN. Residues glutamine 258–proline 472 form the FAD-binding FR-type domain. Residues threonine 346, alanine 380, arginine 410 to serine 413, threonine 428 to glycine 430, tyrosine 434, and glycine 443 to serine 446 each bind FAD. NADP(+) is bound by residues serine 543–arginine 544, lysine 549–glutamine 553, and aspartate 585. Tyrosine 623 provides a ligand contact to FAD.

It belongs to the NADPH-dependent sulphite reductase flavoprotein subunit CysJ family. The protein in the N-terminal section; belongs to the flavodoxin family. This sequence in the C-terminal section; belongs to the flavoprotein pyridine nucleotide cytochrome reductase family. As to quaternary structure, alpha(8)-beta(8). The alpha component is a flavoprotein, the beta component is a hemoprotein. FAD serves as cofactor. FMN is required as a cofactor.

It catalyses the reaction hydrogen sulfide + 3 NADP(+) + 3 H2O = sulfite + 3 NADPH + 4 H(+). Its pathway is sulfur metabolism; hydrogen sulfide biosynthesis; hydrogen sulfide from sulfite (NADPH route): step 1/1. Its function is as follows. Component of the sulfite reductase complex that catalyzes the 6-electron reduction of sulfite to sulfide. This is one of several activities required for the biosynthesis of L-cysteine from sulfate. The flavoprotein component catalyzes the electron flow from NADPH -&gt; FAD -&gt; FMN to the hemoprotein component. The polypeptide is Sulfite reductase [NADPH] flavoprotein alpha-component (Vibrio parahaemolyticus serotype O3:K6 (strain RIMD 2210633)).